The chain runs to 361 residues: Feruloyl CoA ortho-hydroxylase 1 (361 aa).

A Fe2OG dioxygenase domain is found at 204–312 (TKESLFMGSI…RISVPIFVNP (109 aa)). Tyr-220 is a 2-oxoglutarate binding site. 3 residues coordinate Fe cation: His-235, Asp-237, and His-293. 2-oxoglutarate contacts are provided by Arg-303 and Ser-305.

The protein belongs to the iron/ascorbate-dependent oxidoreductase family. Requires L-ascorbate as cofactor. It depends on Fe(2+) as a cofactor. In terms of tissue distribution, highly expressed in roots, especially in the cortex.

The enzyme catalyses (E)-feruloyl-CoA + 2-oxoglutarate + O2 = (E)-6-hydroxyferuloyl-CoA + succinate + CO2. It carries out the reaction (E)-6-hydroxyferuloyl-CoA = scopoletin + CoA. It functions in the pathway phenylpropanoid metabolism. In terms of biological role, 2-oxoglutarate (OG)- and Fe(II)-dependent dioxygenase (2OGD) involved in scopoletin biosynthesis. Converts feruloyl CoA into 6'-hydroxyferuloyl CoA but has no activity with ferulic acid, feruloylquinic acid, caffeic acid, caffeoyl CoA, p-coumaric acid, cinnamic acid, cinnamoyl CoA or benzoyl CoA. Required for the production and secretion of compounds (e.g. fluorescent coumarins) that facilitate the mobilization and uptake of iron from sources with low bioavailability or in high pH-induced iron deficiency conditions. Involved in the pathway of sideretin biosynthesis from feruloyl CoA, a redox-active catecholic metabolite exuded by roots in response to iron deficiency in order to facilitate the uptake of iron; this pathway consists in the successive conversion from feruloyl CoA to scopoletin, from scopoletin to fraxetin and from fraxetin to sideretin. Catalyzes the biosynthesis of scopoletin from feruloyl CoA. This is Feruloyl CoA ortho-hydroxylase 1 from Arabidopsis thaliana (Mouse-ear cress).